The sequence spans 537 residues: Probable metalloreductase AIM14 (537 aa).

The next 7 membrane-spanning stretches (helical) occupy residues 20–40 (GFFI…VKFI), 58–78 (ITNP…IFTG), 95–112 (RYGR…YLVL), 133–155 (KWTS…YKWI), 167–187 (FLNL…IISI), 194–216 (VYST…ITFH), and 221–238 (VTVF…QLYL). A Ferric oxidoreductase domain is found at 97–213 (GRMAYCLIPL…VTAWSMVILI (117 aa)). The region spanning 187 to 363 (IRPFRRKVYS…GGSGISLGLP (177 aa)) is the FAD-binding FR-type domain. The tract at residues 432–475 (EEQGHGLLNNDNENGIELQNMPKTNEESSEANSTNSKNNKDNQE) is disordered.

This sequence belongs to the ferric reductase (FRE) family. AIM14 subfamily.

It is found in the membrane. Its function is as follows. Probable cell surface metalloreductase. May be involved in iron or copper homeostasis. This chain is Probable metalloreductase AIM14 (AIM14), found in Candida dubliniensis (strain CD36 / ATCC MYA-646 / CBS 7987 / NCPF 3949 / NRRL Y-17841) (Yeast).